The chain runs to 391 residues: Metal tolerance protein 7 (391 aa).

The segment at 1-21 is disordered; the sequence is MGSRGRRGGGERETETEEDET. The Cytoplasmic portion of the chain corresponds to 1-103; that stretch reads MGSRGRRGGG…LRQMAKGERL (103 aa). Residues 104-124 traverse the membrane as a helical segment; that stretch reads AINLSNIINLILFIGKVLASV. The Vacuolar portion of the chain corresponds to 125 to 134; sequence ESLSMAVIAS. The chain crosses the membrane as a helical span at residues 135–155; the sequence is TLDSLLDLLSGFILWFTAHAM. At 156-171 the chain is on the cytoplasmic side; sequence KKPNKYSYPIGKRRMQ. Residues 172–192 form a helical membrane-spanning segment; sequence PVGIIVFASVMGTLGFQVLIE. The Vacuolar portion of the chain corresponds to 193–210; sequence SGRQLITNEHQVFDHRKE. Residues 211-231 traverse the membrane as a helical segment; that stretch reads LWMIGSMSSVAVVKFFLMLYC. Topologically, residues 232–246 are cytoplasmic; that stretch reads RSFKNEIVRAYAQDH. The helical transmembrane segment at 247 to 264 threads the bilayer; the sequence is FFDVITNSVGLVSALLAV. At 265-266 the chain is on the vacuolar side; sequence RY. Residues 267–287 form a helical membrane-spanning segment; the sequence is KWWMDPVGAILIAVYTITTWA. Over 288–391 the chain is Cytoplasmic; sequence RTVVENVGTL…THRPEHKAEV (104 aa).

This sequence belongs to the cation diffusion facilitator (CDF) transporter (TC 2.A.4) family. SLC30A subfamily.

It localises to the vacuole membrane. In terms of biological role, involved in sequestration of excess metal in the cytoplasm into vacuoles to maintain metal homeostasis. The protein is Metal tolerance protein 7 (MTP7) of Oryza sativa subsp. japonica (Rice).